Reading from the N-terminus, the 66-residue chain is Probable Sec-independent protein translocase protein TatE (66 aa).

The helical transmembrane segment at 1–21 (MEGISITKLLVIAVLIVLLFG) threads the bilayer. The tract at residues 46–66 (ETPAAKKSDGAEAAPRVENKE) is disordered.

It belongs to the TatA/E family. TatE subfamily.

The protein localises to the cell inner membrane. Functionally, part of the twin-arginine translocation (Tat) system that transports large folded proteins containing a characteristic twin-arginine motif in their signal peptide across membranes. TatE shares overlapping functions with TatA. The polypeptide is Probable Sec-independent protein translocase protein TatE (Edwardsiella piscicida).